The sequence spans 333 residues: MSINVTEIVLHQIHQTEGETPELNTVLRDNLLAISPEVEQMMLQLHQAYQSKAKAYGIFKNESIFAQQLNRLLEQETDFLPFSHSCAKMLSSELAKYPFASGGTFILCRYNFLATDYLFIALIDSRTSMLVDDQLEIKRTEYLDITQYDIACRINLTELKINAQSNRYLTFIKGRVGRKIADFFMDFLSAEEGLNPQLQNQTLLQAVSDYCDQGELSAPQTREVKKQVFEYCKGQINSGEEIALSELSEALPTLNEVDFAQFTQEQEYGLEENIPPVRNALKTLTKYSGSGKGVTISFNADLLGERLIWDELNDTLTIKGLPANLRDQLARNK.

Belongs to the YejK family.

The protein resides in the cytoplasm. Its subcellular location is the nucleoid. The sequence is that of Nucleoid-associated protein APJL_0454 from Actinobacillus pleuropneumoniae serotype 3 (strain JL03).